A 383-amino-acid chain; its full sequence is S-adenosylmethionine synthase (383 aa).

Residue His15 coordinates ATP. A Mg(2+)-binding site is contributed by Asp17. Residue Glu43 coordinates K(+). Residues Glu56 and Gln99 each coordinate L-methionine. Positions 99–109 (QSQDINQGVDR) are flexible loop. Residues 164-166 (DAK), 230-231 (RF), Asp239, 245-246 (RK), Ala262, and Lys266 each bind ATP. Position 239 (Asp239) interacts with L-methionine. Lys270 contributes to the L-methionine binding site.

This sequence belongs to the AdoMet synthase family. As to quaternary structure, homotetramer; dimer of dimers. Requires Mg(2+) as cofactor. K(+) serves as cofactor.

The protein localises to the cytoplasm. It carries out the reaction L-methionine + ATP + H2O = S-adenosyl-L-methionine + phosphate + diphosphate. It participates in amino-acid biosynthesis; S-adenosyl-L-methionine biosynthesis; S-adenosyl-L-methionine from L-methionine: step 1/1. Functionally, catalyzes the formation of S-adenosylmethionine (AdoMet) from methionine and ATP. The overall synthetic reaction is composed of two sequential steps, AdoMet formation and the subsequent tripolyphosphate hydrolysis which occurs prior to release of AdoMet from the enzyme. The polypeptide is S-adenosylmethionine synthase (Actinobacillus succinogenes (strain ATCC 55618 / DSM 22257 / CCUG 43843 / 130Z)).